Reading from the N-terminus, the 602-residue chain is Elongation factor 4 (602 aa).

The tr-type G domain occupies 7 to 189 (KKIRNFSIIA…SIVKNVPSPK (183 aa)). GTP contacts are provided by residues 19-24 (DHGKST) and 136-139 (NKID).

The protein belongs to the TRAFAC class translation factor GTPase superfamily. Classic translation factor GTPase family. LepA subfamily.

The protein localises to the cell membrane. It carries out the reaction GTP + H2O = GDP + phosphate + H(+). Its function is as follows. Required for accurate and efficient protein synthesis under certain stress conditions. May act as a fidelity factor of the translation reaction, by catalyzing a one-codon backward translocation of tRNAs on improperly translocated ribosomes. Back-translocation proceeds from a post-translocation (POST) complex to a pre-translocation (PRE) complex, thus giving elongation factor G a second chance to translocate the tRNAs correctly. Binds to ribosomes in a GTP-dependent manner. The protein is Elongation factor 4 of Alkaliphilus oremlandii (strain OhILAs) (Clostridium oremlandii (strain OhILAs)).